A 79-amino-acid polypeptide reads, in one-letter code: Ketoisovalerate oxidoreductase subunit VorC (79 aa).

4Fe-4S ferredoxin-type domains are found at residues 4–33 (AYPV…MSNK) and 40–70 (HYVE…VHIE). [4Fe-4S] cluster-binding residues include Cys-13, Cys-16, Cys-19, Cys-23, Cys-49, Cys-52, Cys-55, and Cys-59.

Heterotrimer of the VorA, VorB and VorC subunits. [4Fe-4S] cluster is required as a cofactor.

It catalyses the reaction 3-methyl-2-oxobutanoate + 2 oxidized [2Fe-2S]-[ferredoxin] + CoA = 2-methylpropanoyl-CoA + 2 reduced [2Fe-2S]-[ferredoxin] + CO2 + H(+). This is Ketoisovalerate oxidoreductase subunit VorC (vorC) from Methanothermobacter marburgensis (strain ATCC BAA-927 / DSM 2133 / JCM 14651 / NBRC 100331 / OCM 82 / Marburg) (Methanobacterium thermoautotrophicum).